Reading from the N-terminus, the 74-residue chain is Conotoxin Vc6.11 (74 aa).

Residues M1 to A19 form the signal peptide. Residues L20–E41 constitute a propeptide that is removed on maturation. 2 cysteine pairs are disulfide-bonded: C55–C66 and C61–C71.

This sequence belongs to the conotoxin O2 superfamily. As to expression, expressed by the venom duct.

Its subcellular location is the secreted. Its function is as follows. Inhibits voltage-gated ion channels. The chain is Conotoxin Vc6.11 from Conus victoriae (Queen Victoria cone).